Reading from the N-terminus, the 267-residue chain is Hydroxyethylthiazole kinase (267 aa).

Met44 is a binding site for substrate. The ATP site is built by Arg120 and Thr165. Gly192 is a substrate binding site.

This sequence belongs to the Thz kinase family. Requires Mg(2+) as cofactor.

The catalysed reaction is 5-(2-hydroxyethyl)-4-methylthiazole + ATP = 4-methyl-5-(2-phosphooxyethyl)-thiazole + ADP + H(+). The protein operates within cofactor biosynthesis; thiamine diphosphate biosynthesis; 4-methyl-5-(2-phosphoethyl)-thiazole from 5-(2-hydroxyethyl)-4-methylthiazole: step 1/1. Functionally, catalyzes the phosphorylation of the hydroxyl group of 4-methyl-5-beta-hydroxyethylthiazole (THZ). This Carboxydothermus hydrogenoformans (strain ATCC BAA-161 / DSM 6008 / Z-2901) protein is Hydroxyethylthiazole kinase.